Here is a 394-residue protein sequence, read N- to C-terminus: Ornithine aminotransferase 1 (394 aa).

An N6-(pyridoxal phosphate)lysine modification is found at Lys-252.

Belongs to the class-III pyridoxal-phosphate-dependent aminotransferase family. OAT subfamily. It depends on pyridoxal 5'-phosphate as a cofactor.

It localises to the cytoplasm. The catalysed reaction is a 2-oxocarboxylate + L-ornithine = L-glutamate 5-semialdehyde + an L-alpha-amino acid. It functions in the pathway amino-acid biosynthesis; L-proline biosynthesis; L-glutamate 5-semialdehyde from L-ornithine: step 1/1. In terms of biological role, catalyzes the interconversion of ornithine to glutamate semialdehyde. This chain is Ornithine aminotransferase 1, found in Staphylococcus aureus (strain MRSA252).